Consider the following 972-residue polypeptide: mRNA transport regulator MTR10 (972 aa).

It localises to the nucleus. Functionally, involved in mRNA transport from nucleus to cytoplasm. This Saccharomyces cerevisiae (strain ATCC 204508 / S288c) (Baker's yeast) protein is mRNA transport regulator MTR10 (MTR10).